A 330-amino-acid chain; its full sequence is Aspartate--ammonia ligase (330 aa).

The protein belongs to the class-II aminoacyl-tRNA synthetase family. AsnA subfamily.

The protein localises to the cytoplasm. It carries out the reaction L-aspartate + NH4(+) + ATP = L-asparagine + AMP + diphosphate + H(+). The protein operates within amino-acid biosynthesis; L-asparagine biosynthesis; L-asparagine from L-aspartate (ammonia route): step 1/1. The protein is Aspartate--ammonia ligase of Shigella sonnei (strain Ss046).